Consider the following 207-residue polypeptide: Ribosomal RNA large subunit methyltransferase E (207 aa).

The disordered stretch occupies residues 1 to 20 (MKRDPTKGRKTPDHYARKAK). S-adenosyl-L-methionine contacts are provided by Gly-56, Trp-58, Asp-76, Asp-94, and Asp-116. Lys-156 serves as the catalytic Proton acceptor.

Belongs to the class I-like SAM-binding methyltransferase superfamily. RNA methyltransferase RlmE family.

It is found in the cytoplasm. The catalysed reaction is uridine(2552) in 23S rRNA + S-adenosyl-L-methionine = 2'-O-methyluridine(2552) in 23S rRNA + S-adenosyl-L-homocysteine + H(+). Its function is as follows. Specifically methylates the uridine in position 2552 of 23S rRNA at the 2'-O position of the ribose in the fully assembled 50S ribosomal subunit. The chain is Ribosomal RNA large subunit methyltransferase E from Desulfosudis oleivorans (strain DSM 6200 / JCM 39069 / Hxd3) (Desulfococcus oleovorans).